The chain runs to 402 residues: B3 domain-containing protein Os01g0723500 (402 aa).

Positions 18–121 (RPHFFKVLVG…RFTAMVFDRT (104 aa)) form a DNA-binding region, TF-B3 1. Residues 126-203 (EDLMGGGGGD…VKNEEDADEL (78 aa)) are disordered. Over residues 152 to 162 (DAARPKKDSVG) the composition is skewed to basic and acidic residues. The span at 173–186 (SGGQPLQIVDSSWT) shows a compositional bias: polar residues. A DNA-binding region (TF-B3 2) is located at residues 289-381 (CVIRMSTMHV…EFRVHIFRVV (93 aa)).

It localises to the nucleus. This Oryza sativa subsp. japonica (Rice) protein is B3 domain-containing protein Os01g0723500.